A 344-amino-acid chain; its full sequence is uncharacterized protein (344 aa).

This sequence belongs to the glycosyltransferase 2 family.

In terms of biological role, may be involved in the production of the exopolysaccharide (EPS) component of the extracellular matrix during biofilm formation. EPS is responsible for the adhesion of chains of cells into bundles. This is an uncharacterized protein from Bacillus subtilis (strain 168).